A 348-amino-acid polypeptide reads, in one-letter code: tRNA N6-adenosine threonylcarbamoyltransferase (348 aa).

His-111 and His-115 together coordinate Fe cation. Residues 134-138 (LVSGG), Asp-167, Gly-180, Asp-184, and Asn-279 contribute to the substrate site. Fe cation is bound at residue Asp-307.

Belongs to the KAE1 / TsaD family. Fe(2+) is required as a cofactor.

The protein localises to the cytoplasm. It catalyses the reaction L-threonylcarbamoyladenylate + adenosine(37) in tRNA = N(6)-L-threonylcarbamoyladenosine(37) in tRNA + AMP + H(+). Required for the formation of a threonylcarbamoyl group on adenosine at position 37 (t(6)A37) in tRNAs that read codons beginning with adenine. Is involved in the transfer of the threonylcarbamoyl moiety of threonylcarbamoyl-AMP (TC-AMP) to the N6 group of A37, together with TsaE and TsaB. TsaD likely plays a direct catalytic role in this reaction. The polypeptide is tRNA N6-adenosine threonylcarbamoyltransferase (Synechocystis sp. (strain ATCC 27184 / PCC 6803 / Kazusa)).